The chain runs to 995 residues: DNA repair protein Rev1 (995 aa).

The region spanning 35–121 is the BRCT domain; sequence RKSDLFQGIS…KIVDYKPYLL (87 aa). Disordered regions lie at residues 135 to 164 and 182 to 211; these read GKPK…DSTK and VATS…TTAR. Positions 136–164 are enriched in basic and acidic residues; the sequence is KPKDNGANESKSDVEPPKDKAEVEVDSTK. Over residues 192–211 the composition is skewed to low complexity; that stretch reads ASESKITNLSTTSNNSTTAR. The 231-residue stretch at 275–505 folds into the UmuC domain; it reads VMHIDMDCFF…MSLDLLPGVG (231 aa). Mg(2+) is bound at residue Asp279. Residues 361 to 367, Asn373, and Asp421 each bind dCTP; that span reads SCSYEAR. A Mg(2+)-binding site is contributed by Asp421. The active site involves Glu422. Residues 696-868 form an interaction with PolI region; the sequence is SEMRKDKPIP…HYIRSDQIVA (173 aa). The interaction with PolH/DNApol-eta stretch occupies residues 878–995; the sequence is VNPHILKLIS…IEYIRCIKCS (118 aa).

The protein belongs to the DNA polymerase type-Y family. As to quaternary structure, interacts (via C-terminus) with PolH/DNApol-eta (via C-terminal regions). Interacts (via C-terminus) with PolI. Mg(2+) is required as a cofactor.

The protein localises to the nucleus. Deoxycytidyl transferase involved in DNA repair. Transfers a dCMP residue from dCTP to the 3'-end of a DNA primer in a template-dependent reaction. May assist in the first step in the bypass of abasic lesions by the insertion of a nucleotide opposite the lesion. Required for normal induction of mutations by physical and chemical agents. During homologous recombination (HR) repair of DNA double-strand breaks (DSBs) regulates the extent of repair synthesis. Possibly recruits the DNA polymerase zeta complex or another translesion polymerase to early DSB repair intermediates to initiate repair synthesis, while also blocking the access of more processive polymerases preventing them from acting during the initial stages of HR repair. This is DNA repair protein Rev1 from Drosophila melanogaster (Fruit fly).